The primary structure comprises 197 residues: Prefoldin subunit 3 (197 aa).

Alanine 2 carries the N-acetylalanine modification. Lysine 59 carries the N6-acetyllysine modification.

Belongs to the prefoldin subunit alpha family. In terms of assembly, heterohexamer of two PFD-alpha type and four PFD-beta type subunits. Binds to the C-terminal part of VHL. In terms of tissue distribution, ubiquitous.

The protein resides in the cytoplasm. The protein localises to the nucleus. Binds specifically to cytosolic chaperonin (c-CPN) and transfers target proteins to it. Binds to nascent polypeptide chain and promotes folding in an environment in which there are many competing pathways for nonnative proteins. This chain is Prefoldin subunit 3 (VBP1), found in Homo sapiens (Human).